A 593-amino-acid polypeptide reads, in one-letter code: ATP-dependent RNA helicase MRH4, mitochondrial (593 aa).

The transit peptide at 1-106 (MFPLRAQSAS…QLRIFPTVRA (106 aa)) directs the protein to the mitochondrion. Residues 42 to 51 (GANGANRANG) are compositionally biased toward low complexity. Residues 42–63 (GANGANRANGTNSSQPESQSSK) form a disordered region. Over residues 52–63 (TNSSQPESQSSK) the composition is skewed to polar residues. The short motif at 130-137 (VLKPTPIQ) is the Q motif element. The region spanning 181-399 (INSLQKLKVF…NRIFPTDDSI (219 aa)) is the Helicase ATP-binding domain. 194-201 (AETGSGKT) serves as a coordination point for ATP. Positions 347-350 (DEAD) match the DEAD box motif. The 161-residue stretch at 433–593 (ALAQALYAIT…NAVKRGIQMG (161 aa)) folds into the Helicase C-terminal domain.

The protein belongs to the DEAD box helicase family. MRH4 subfamily.

It is found in the mitochondrion. The enzyme catalyses ATP + H2O = ADP + phosphate + H(+). ATP-binding RNA helicase involved in mitochondrial RNA metabolism. Required for maintenance of mitochondrial DNA. The protein is ATP-dependent RNA helicase MRH4, mitochondrial (MRH4) of Scheffersomyces stipitis (strain ATCC 58785 / CBS 6054 / NBRC 10063 / NRRL Y-11545) (Yeast).